A 393-amino-acid polypeptide reads, in one-letter code: Bone morphogenetic protein 2 (393 aa).

Positions 1–19 are cleaved as a signal peptide; sequence MVAGTRCLLVLLLPQVLLG. Residues 20-279 constitute a propeptide, cleaved by PCSK5; sequence GAAGLIPELG…GHPLHKREKR (260 aa). Ser85 bears the Phosphoserine mark. N-linked (GlcNAc...) asparagine glycans are attached at residues Asn133, Asn161, and Asn197. The tract at residues 268–290 is disordered; it reads GKGHPLHKREKRQAKHKQRKRLK. The segment covering 271 to 290 has biased composition (basic residues); it reads HPLHKREKRQAKHKQRKRLK. Intrachain disulfides connect Cys293-Cys358, Cys322-Cys390, and Cys326-Cys392. An N-linked (GlcNAc...) asparagine glycan is attached at Asn335.

The protein belongs to the TGF-beta family. In terms of assembly, homodimer; disulfide-linked. Interacts with SOSTDC1. Interacts with GREM2, RGMA, RGMB and RGMC. Interacts with ASPN. Interacts with MAFP5. Interacts with FBN1 (via N-terminal domain) and FBN2. Interacts with type I receptor BMPR1A. Interacts with type II receptor BMPR2. Interacts with SCUBE3. Interacts with TNFAIP6 (primarily via Link domain); this interaction is inhibited by hyaluronan. Interacts with ERFE. Interacts with BMPR1A/ALK3; the interaction may induce HAMP expression. Forms heterodimers with BMP6 in vitro; the heterodimer then binds to its receptor BMPR1A /ALK3 and may induce HAMP expression. Interacts with TGFBR3. Expressed in femur, calvaria, trachea, lung and ovary.

The protein resides in the secreted. Growth factor of the TGF-beta superfamily that plays essential roles in many developmental processes, including cardiogenesis, neurogenesis, and osteogenesis. Induces cartilage and bone formation. Initiates the canonical BMP signaling cascade by associating with type I receptor BMPR1A and type II receptor BMPR2. Once all three components are bound together in a complex at the cell surface, BMPR2 phosphorylates and activates BMPR1A. In turn, BMPR1A propagates signal by phosphorylating SMAD1/5/8 that travel to the nucleus and act as activators and repressors of transcription of target genes. Also acts to promote expression of HAMP, via the interaction with its receptor BMPR1A/ALK3. Can also signal through non-canonical pathways such as ERK/MAP kinase signaling cascade that regulates osteoblast differentiation. Also stimulates the differentiation of myoblasts into osteoblasts via the EIF2AK3-EIF2A-ATF4 pathway by stimulating EIF2A phosphorylation which leads to increased expression of ATF4 which plays a central role in osteoblast differentiation. Acts as a positive regulator of odontoblast differentiation during mesenchymal tooth germ formation, expression is repressed during the bell stage by MSX1-mediated inhibition of CTNNB1 signaling. The sequence is that of Bone morphogenetic protein 2 (Bmp2) from Rattus norvegicus (Rat).